The sequence spans 498 residues: NAC domain-containing protein 75 (498 aa).

The NAC domain occupies 48-215 (LPAGVKFDPT…ELVVSKIFYQ (168 aa)). A DNA-binding region spans residues 166-221 (KGCKKILVLYTNFGKNRKPEKTNWVMHQYHLGTHEEEKEGELVVSKIFYQTQPRQC). Disordered regions lie at residues 225–278 (SSTS…PNRS), 338–374 (VMAEQHRHRHQPSSSTSHHMAHDHHHHHHQQQQQRHH), 423–443 (QQQLRQEGEEEHNDGKMGGRS), and 457–498 (STTH…DHHG). Residues 233 to 248 (IGGGGGEASSGGGGGE) show a composition bias toward gly residues. Low complexity predominate over residues 256-266 (GTTSGGSCSSS). The segment covering 356-374 (HMAHDHHHHHHQQQQQRHH) has biased composition (basic residues). A compositionally biased stretch (polar residues) spans 466–475 (GSSSMGNQQE).

As to expression, expressed in the vascular cylinder of roots. Expressed in the differentiation zone of the root stele.

Its subcellular location is the nucleus. Transcription activator involved in xylem formation. Promotes the expression of the secondary wall-associated transcription factor MYB46. Functions upstream of NAC030/VND7, a master switch of xylem vessel differentiation. Acts as a upstream regulator of NAC101/VND6 and LBD30/ASL19. This Arabidopsis thaliana (Mouse-ear cress) protein is NAC domain-containing protein 75.